Here is a 126-residue protein sequence, read N- to C-terminus: Large ribosomal subunit protein uL22 (126 aa).

The protein belongs to the universal ribosomal protein uL22 family. Part of the 50S ribosomal subunit.

This protein binds specifically to 23S rRNA; its binding is stimulated by other ribosomal proteins, e.g. L4, L17, and L20. It is important during the early stages of 50S assembly. It makes multiple contacts with different domains of the 23S rRNA in the assembled 50S subunit and ribosome. In terms of biological role, the globular domain of the protein is located near the polypeptide exit tunnel on the outside of the subunit, while an extended beta-hairpin is found that lines the wall of the exit tunnel in the center of the 70S ribosome. The protein is Large ribosomal subunit protein uL22 of Caulobacter vibrioides (strain ATCC 19089 / CIP 103742 / CB 15) (Caulobacter crescentus).